A 764-amino-acid polypeptide reads, in one-letter code: 5-methyltetrahydropteroyltriglutamate--homocysteine methyltransferase (764 aa).

5-methyltetrahydropteroyltri-L-glutamate is bound by residues 16–19 (RELK) and Lys121. Residues 440–442 (IGS) and Glu493 contribute to the L-homocysteine site. L-methionine is bound by residues 440 to 442 (IGS) and Glu493. Residues 524–525 (RC) and Trp570 contribute to the 5-methyltetrahydropteroyltri-L-glutamate site. Residue Asp608 coordinates L-homocysteine. Position 608 (Asp608) interacts with L-methionine. Glu614 provides a ligand contact to 5-methyltetrahydropteroyltri-L-glutamate. His650, Cys652, and Glu674 together coordinate Zn(2+). His703 (proton donor) is an active-site residue. Cys735 contacts Zn(2+).

The protein belongs to the vitamin-B12 independent methionine synthase family. It depends on Zn(2+) as a cofactor.

The catalysed reaction is 5-methyltetrahydropteroyltri-L-glutamate + L-homocysteine = tetrahydropteroyltri-L-glutamate + L-methionine. Its pathway is amino-acid biosynthesis; L-methionine biosynthesis via de novo pathway; L-methionine from L-homocysteine (MetE route): step 1/1. In terms of biological role, catalyzes the transfer of a methyl group from 5-methyltetrahydrofolate to homocysteine resulting in methionine formation. The chain is 5-methyltetrahydropteroyltriglutamate--homocysteine methyltransferase from Burkholderia cenocepacia (strain ATCC BAA-245 / DSM 16553 / LMG 16656 / NCTC 13227 / J2315 / CF5610) (Burkholderia cepacia (strain J2315)).